A 216-amino-acid chain; its full sequence is Elongation factor Ts (216 aa).

Residues 81-84 (TDFV) are involved in Mg(2+) ion dislocation from EF-Tu.

Belongs to the EF-Ts family.

It localises to the cytoplasm. Its function is as follows. Associates with the EF-Tu.GDP complex and induces the exchange of GDP to GTP. It remains bound to the aminoacyl-tRNA.EF-Tu.GTP complex up to the GTP hydrolysis stage on the ribosome. The chain is Elongation factor Ts from Geobacter metallireducens (strain ATCC 53774 / DSM 7210 / GS-15).